The chain runs to 483 residues: MEYIEGNTGKWEYVIGLEIHAQISSKTKLFSGSSTLFAASPNSQVSYVDAAMPGMLPVLNKHCVHQAIKTGLALKAKINKYSVFDRKNYFYADLPQGYQISQFYYPIVQDGMIEIQTSTGNLKTIRINRLHLEQDAGKSIHDQSPYYSMIDLNRAGIGLMEIVTEPDISSPEEAAEFVKKLRNLLRYIGSCDGDMEKGSLRCDANISVRRSGEALGTRCEIKNINSIRNIIKAIEFEAKRQVDLLESGEAIIQETRLFNVDSCETKTMRLKEEALDYRYFPDPDLLPLVIHDELINELKSSLPELPDQKIEKYTKKFGLSKYDAGIIVSDESIAEYFEKAANECNPKMLTNWLITELFGQLNKASIGISECKITPSDFAKLIKLIENNTISGKIAKTVFEIMFATGKAPDKIVEEKGLVQISDNKILNTVIDEVIAENSKSVKCYKSGKDKLFGFFVGQVMKKTKCKANPTLVNKLLKEKLDS.

This sequence belongs to the GatB/GatE family. GatB subfamily. Heterotrimer of A, B and C subunits.

The catalysed reaction is L-glutamyl-tRNA(Gln) + L-glutamine + ATP + H2O = L-glutaminyl-tRNA(Gln) + L-glutamate + ADP + phosphate + H(+). It carries out the reaction L-aspartyl-tRNA(Asn) + L-glutamine + ATP + H2O = L-asparaginyl-tRNA(Asn) + L-glutamate + ADP + phosphate + 2 H(+). In terms of biological role, allows the formation of correctly charged Asn-tRNA(Asn) or Gln-tRNA(Gln) through the transamidation of misacylated Asp-tRNA(Asn) or Glu-tRNA(Gln) in organisms which lack either or both of asparaginyl-tRNA or glutaminyl-tRNA synthetases. The reaction takes place in the presence of glutamine and ATP through an activated phospho-Asp-tRNA(Asn) or phospho-Glu-tRNA(Gln). This is Aspartyl/glutamyl-tRNA(Asn/Gln) amidotransferase subunit B from Rickettsia typhi (strain ATCC VR-144 / Wilmington).